The following is a 326-amino-acid chain: MVDYYEVLGVQKHASAEDIKKAYRKLALKWHPDKNPENKEEAEQQFKQVAEAYEVLSDAKKRDIYDRFGKEGLINGGGGGSHHDNPFEFGFTFRNPDDVFREFFGGRDPFSFDFFEDPFEDFFGGRRGPRGSRSRAGGSFLSAFGGFPAFGNAFPSFDTGFTSFGSLGHGGLTSFSSTSFGGSGMGNFKSVSTSTKIVNGRKITTKRIVENGQERVEVEEDGQLRSLTINGEANEEAFAEECRRRGQHALPFQPTNTRLLKPHKPASSPRYAYHYNSDEVEEQEKSRVASSLETPFYLSGYKEGSKRRKQKQREEQKKKKSTKGSY.

The J domain occupies 3–69 (DYYEVLGVQK…KKRDIYDRFG (67 aa)). The tract at residues 249–326 (ALPFQPTNTR…KKKKSTKGSY (78 aa)) is disordered. A Phosphoserine modification is found at S277.

In terms of assembly, homooligomer.

It localises to the cytoplasm. The protein resides in the perinuclear region. Its subcellular location is the nucleus. In terms of biological role, has a stimulatory effect on the ATPase activity of HSP70 in a dose-dependent and time-dependent manner and hence acts as a co-chaperone of HSP70. Plays an indispensable role in the organization of KRT8/KRT18 filaments. Acts as an endogenous molecular chaperone for neuronal proteins including huntingtin. Suppresses aggregation and toxicity of polyglutamine-containing, aggregation-prone proteins. Also reduces cellular toxicity and caspase-3 activity. The sequence is that of DnaJ homolog subfamily B member 6 from Gallus gallus (Chicken).